Reading from the N-terminus, the 918-residue chain is uncharacterized protein (918 aa).

Disordered stretches follow at residues 66–150 (AMVH…SSYG), 226–283 (GADG…NADF), 326–481 (ADGT…EFGN), 515–548 (ALEK…GSNL), 594–707 (EITH…NAVK), 737–774 (NHSN…SHLT), and 800–918 (HITH…IIQM). Low complexity predominate over residues 79 to 89 (QSSGSSSNTHS). Residues 103–127 (NSEKKDGYNKESKVDEANENTKIKS) are compositionally biased toward basic and acidic residues. Low complexity predominate over residues 270–281 (SKKAASASGSNA). Composition is skewed to polar residues over residues 326–354 (ADGT…SSDL), 363–372 (KSHSTSNKTD), and 379–404 (ANQS…SSIE). A compositionally biased stretch (low complexity) spans 430–441 (SSSHSKSASGTS). Positions 515 to 533 (ALEKNHEKNSDGTFKDESK) are enriched in basic and acidic residues. 2 stretches are compositionally biased toward polar residues: residues 534 to 545 (GSNSRVNRTDGG) and 604 to 619 (VAAS…TSMS). Positions 632–647 (SSQAADSHDAISASSD) are enriched in low complexity. Residues 648–660 (VDAKIVKHADRSE) show a composition bias toward basic and acidic residues. Residues 661-672 (SISNDSSNQTAS) show a composition bias toward polar residues. The span at 673–688 (EHNDSSKQSEHEKRQN) shows a compositional bias: basic and acidic residues. A compositionally biased stretch (polar residues) spans 689–702 (ADGSFSDVSSNSAK). 4 stretches are compositionally biased toward basic and acidic residues: residues 738-765 (HSND…DAKH), 800-814 (HITH…DAGH), 830-846 (EGFK…EGAQ), and 883-918 (LAKD…IIQM).

This is an uncharacterized protein from Caenorhabditis elegans.